The following is a 490-amino-acid chain: MNFGFLGTILTILLVVGFITNVVLAFVIIFLERDRRTASSTWAWLFVLFVLPVIGFILYLFLGRTVSKKKMEKNNGDELHAFEDLVQDQIDSFDKHNYGYINDQVIKHRDLIRMLLMKQDAFLTENNKIDLFTDGHKLYEKVLEDIYNAQDYIHLEYYTFELDGLGKRILDALETKLKEGLEVKLLYDDVGSKKVRLSKFKHFRALGGEVEAFFPSKVPLINFRMNNRNHRKIIIIDGQIGYIGGFNVGDDYLGLGKLGYWRDTHTRVQGEVIDALQLRFILDWNSQSHRPQFKFDQKYFPKKIGDKGNAAIQIASSGPAFDLHQIEYGYTKMIMSAKKSIYLQSPYFIPDQSYINALKMAANSGVEVNLMIPCKPDHPFVYWATFSNAADLLDSGVNIYTYQNGFIHSKILMIDDEISSIGSANMDFRSFELNFEVNAFIYDEDIAKQLRQAFEKDIEQSKLLTKKVYDKRPLSIKFKEGLAKLISPIL.

A run of 2 helical transmembrane segments spans residues 9–29 and 42–62; these read ILTI…FVII and WAWL…YLFL. PLD phosphodiesterase domains follow at residues 225 to 252 and 403 to 430; these read MNNR…GDDY and QNGF…DFRS. Residues histidine 230, lysine 232, aspartate 237, histidine 408, lysine 410, and aspartate 415 contribute to the active site.

This sequence belongs to the phospholipase D family. Cardiolipin synthase subfamily.

It is found in the cell membrane. It catalyses the reaction 2 a 1,2-diacyl-sn-glycero-3-phospho-(1'-sn-glycerol) = a cardiolipin + glycerol. In terms of biological role, catalyzes the reversible phosphatidyl group transfer from one phosphatidylglycerol molecule to another to form cardiolipin (CL) (diphosphatidylglycerol) and glycerol. The sequence is that of Cardiolipin synthase 1 (cls1) from Staphylococcus epidermidis (strain ATCC 35984 / DSM 28319 / BCRC 17069 / CCUG 31568 / BM 3577 / RP62A).